A 342-amino-acid polypeptide reads, in one-letter code: N-acetyl-gamma-glutamyl-phosphate reductase (342 aa).

Cys146 is an active-site residue.

It belongs to the NAGSA dehydrogenase family. Type 1 subfamily.

The protein resides in the cytoplasm. It carries out the reaction N-acetyl-L-glutamate 5-semialdehyde + phosphate + NADP(+) = N-acetyl-L-glutamyl 5-phosphate + NADPH + H(+). Its pathway is amino-acid biosynthesis; L-arginine biosynthesis; N(2)-acetyl-L-ornithine from L-glutamate: step 3/4. Functionally, catalyzes the NADPH-dependent reduction of N-acetyl-5-glutamyl phosphate to yield N-acetyl-L-glutamate 5-semialdehyde. The protein is N-acetyl-gamma-glutamyl-phosphate reductase of Saccharopolyspora erythraea (strain ATCC 11635 / DSM 40517 / JCM 4748 / NBRC 13426 / NCIMB 8594 / NRRL 2338).